The primary structure comprises 344 residues: Phenylalanine--tRNA ligase alpha subunit (344 aa).

A Mg(2+)-binding site is contributed by glutamate 259.

The protein belongs to the class-II aminoacyl-tRNA synthetase family. Phe-tRNA synthetase alpha subunit type 1 subfamily. Tetramer of two alpha and two beta subunits. Mg(2+) is required as a cofactor.

The protein resides in the cytoplasm. The enzyme catalyses tRNA(Phe) + L-phenylalanine + ATP = L-phenylalanyl-tRNA(Phe) + AMP + diphosphate + H(+). This Petrotoga mobilis (strain DSM 10674 / SJ95) protein is Phenylalanine--tRNA ligase alpha subunit.